We begin with the raw amino-acid sequence, 193 residues long: Cbp/p300-interacting transactivator 1 (193 aa).

Disordered regions lie at residues 1-26, 50-88, and 106-147; these read MPTT…NQEM, VASN…LHPA, and GMAA…SPAI. A compositionally biased stretch (low complexity) spans 54 to 73; that stretch reads GTKASGAPTSSSGSPIGSPT. Residues 158-167 carry the Nuclear export signal motif; sequence LMSLVVELGL.

This sequence belongs to the CITED family. Interacts (via C-terminus) with CREBBP. Interacts with EGR2. Homodimer. Binds to RBM14. Interacts (via N-terminus) with HSPA8; the interaction suppresses the association of CITED1 with p300/CBP and SMAD-mediated transcription transactivation. Interacts (via C-terminus) with TOX3 (via HGM box); the interaction increases estrogen-response element (ERE)-dependent transcription and protection against cell death. Interacts with ESR1; the interaction occurs in a estrogen-dependent manner. Interacts (unphosphorylated form preferentially and via C-terminus) with EP300. Post-translationally, phosphorylated. Phosphorylation changes in a cell cycle-dependent manner and reduces its transcriptional coactivator activity. In terms of tissue distribution, expressed only in melanocytes and testis.

It localises to the nucleus. It is found in the cytoplasm. Transcriptional coactivator of the p300/CBP-mediated transcription complex. Enhances SMAD-mediated transcription by strengthening the functional link between the DNA-binding SMAD transcription factors and the p300/CBP transcription coactivator complex. Stimulates estrogen-dependent transactivation activity mediated by estrogen receptors signaling; stabilizes the interaction of estrogen receptor ESR1 and histone acetyltransferase EP300. Positively regulates TGF-beta signaling through its association with the SMAD/p300/CBP-mediated transcriptional coactivator complex. Induces transcription from estrogen-responsive promoters and protection against cell death. Potentiates EGR2-mediated transcriptional activation activity from the ERBB2 promoter. Acts as an inhibitor of osteoblastic mineralization through a cAMP-dependent parathyroid hormone receptor signaling. May play a role in pigmentation of melanocytes. Associates with chromatin to the estrogen-responsive TGF-alpha promoter region in a estrogen-dependent manner. The chain is Cbp/p300-interacting transactivator 1 (CITED1) from Homo sapiens (Human).